We begin with the raw amino-acid sequence, 273 residues long: Kit ligand (273 aa).

An N-terminal signal peptide occupies residues Met1 to Thr25. Over Lys26 to Gln214 the chain is Extracellular. Cystine bridges form between Cys29–Cys114 and Cys68–Cys163. N-linked (GlcNAc...) asparagine glycosylation is found at Asn90, Asn97, Asn145, and Asn195. A disordered region spans residues Ala190–Asp210. Over residues Ser191–Arg202 the composition is skewed to low complexity. A helical membrane pass occupies residues Trp215–Trp237. Residues Lys238–Val273 are Cytoplasmic-facing.

Belongs to the SCF family. In terms of assembly, homodimer, non-covalently linked. Heterotetramer with KIT, binding two KIT molecules; thereby mediates KIT dimerization and subsequent activation by autophosphorylation. In terms of processing, a soluble form is produced by proteolytic processing of isoform 1 in the extracellular domain. Expressed in the cochlea.

It localises to the cell membrane. Its subcellular location is the cytoplasm. It is found in the cytoskeleton. The protein resides in the cell projection. The protein localises to the lamellipodium. It localises to the filopodium. Its subcellular location is the secreted. In terms of biological role, ligand for the receptor-type protein-tyrosine kinase KIT. Plays an essential role in the regulation of cell survival and proliferation, hematopoiesis, stem cell maintenance, gametogenesis, mast cell development, migration and function, and in melanogenesis. KITLG/SCF binding can activate several signaling pathways. Promotes phosphorylation of PIK3R1, the regulatory subunit of phosphatidylinositol 3-kinase, and subsequent activation of the kinase AKT1. KITLG/SCF and KIT also transmit signals via GRB2 and activation of RAS, RAF1 and the MAP kinases MAPK1/ERK2 and/or MAPK3/ERK1. KITLG/SCF and KIT promote activation of STAT family members STAT1, STAT3 and STAT5. KITLG/SCF and KIT promote activation of PLCG1, leading to the production of the cellular signaling molecules diacylglycerol and inositol 1,4,5-trisphosphate. KITLG/SCF acts synergistically with other cytokines, probably interleukins. This is Kit ligand (Kitlg) from Mus musculus (Mouse).